The chain runs to 306 residues: UDP-3-O-acyl-N-acetylglucosamine deacetylase (306 aa).

Residues H79, H239, and D243 each contribute to the Zn(2+) site. The active-site Proton donor is H266.

Belongs to the LpxC family. It depends on Zn(2+) as a cofactor.

It catalyses the reaction a UDP-3-O-[(3R)-3-hydroxyacyl]-N-acetyl-alpha-D-glucosamine + H2O = a UDP-3-O-[(3R)-3-hydroxyacyl]-alpha-D-glucosamine + acetate. Its pathway is glycolipid biosynthesis; lipid IV(A) biosynthesis; lipid IV(A) from (3R)-3-hydroxytetradecanoyl-[acyl-carrier-protein] and UDP-N-acetyl-alpha-D-glucosamine: step 2/6. Functionally, catalyzes the hydrolysis of UDP-3-O-myristoyl-N-acetylglucosamine to form UDP-3-O-myristoylglucosamine and acetate, the committed step in lipid A biosynthesis. This is UDP-3-O-acyl-N-acetylglucosamine deacetylase from Actinobacillus pleuropneumoniae serotype 7 (strain AP76).